The chain runs to 147 residues: Ribosomal RNA large subunit methyltransferase H (147 aa).

S-adenosyl-L-methionine-binding positions include L64, G96, and 115 to 120 (FSKMTF).

The protein belongs to the RNA methyltransferase RlmH family. Homodimer.

The protein localises to the cytoplasm. The enzyme catalyses pseudouridine(1915) in 23S rRNA + S-adenosyl-L-methionine = N(3)-methylpseudouridine(1915) in 23S rRNA + S-adenosyl-L-homocysteine + H(+). Specifically methylates the pseudouridine at position 1915 (m3Psi1915) in 23S rRNA. This is Ribosomal RNA large subunit methyltransferase H from Acholeplasma laidlawii (strain PG-8A).